The primary structure comprises 313 residues: Porphobilinogen deaminase (313 aa).

S-(dipyrrolylmethanemethyl)cysteine is present on Cys-242.

This sequence belongs to the HMBS family. Monomer. Dipyrromethane is required as a cofactor.

The catalysed reaction is 4 porphobilinogen + H2O = hydroxymethylbilane + 4 NH4(+). The protein operates within porphyrin-containing compound metabolism; protoporphyrin-IX biosynthesis; coproporphyrinogen-III from 5-aminolevulinate: step 2/4. Functionally, tetrapolymerization of the monopyrrole PBG into the hydroxymethylbilane pre-uroporphyrinogen in several discrete steps. The protein is Porphobilinogen deaminase of Yersinia pseudotuberculosis serotype O:1b (strain IP 31758).